Here is a 305-residue protein sequence, read N- to C-terminus: N-acetylneuraminate lyase (305 aa).

The aceneuramate site is built by T51 and T52. Catalysis depends on Y143, which acts as the Proton donor. K173 functions as the Schiff-base intermediate with substrate in the catalytic mechanism. The aceneuramate site is built by T175, G197, D199, E200, and S216.

The protein belongs to the DapA family. NanA subfamily. In terms of assembly, homotetramer.

It localises to the cytoplasm. It catalyses the reaction aceneuramate = aldehydo-N-acetyl-D-mannosamine + pyruvate. It participates in amino-sugar metabolism; N-acetylneuraminate degradation. Functionally, catalyzes the cleavage of N-acetylneuraminic acid (sialic acid) to form pyruvate and N-acetylmannosamine via a Schiff base intermediate. It prevents sialic acids from being recycled and returning to the cell surface. Involved in the N-glycolylneuraminic acid (Neu5Gc) degradation pathway. This chain is N-acetylneuraminate lyase, found in Xenopus tropicalis (Western clawed frog).